The sequence spans 174 residues: MSASETDRWAWLLVLCFVFGCNVLRILLPTLSSFISRVLQKDAEQESQMRAEIQSMKQELSTVNMMDEFARYARLERKINKMTDKLKTHVKARTAQLAKIKWFISVAFYVLQAALMISLIWKYYSVPVAVVPSKWITPLDRLVAFPTRVAGGIGVTCWILVCNKVVAIILHPFS.

The Lumenal portion of the chain corresponds to 1–8 (MSASETDR). The helical transmembrane segment at 9-29 (WAWLLVLCFVFGCNVLRILLP) threads the bilayer. At 30–99 (TLSSFISRVL…VKARTAQLAK (70 aa)) the chain is on the cytoplasmic side. The stretch at 39–94 (LQKDAEQESQMRAEIQSMKQELSTVNMMDEFARYARLERKINKMTDKLKTHVKART) forms a coiled coil. The interval 39–97 (LQKDAEQESQMRAEIQSMKQELSTVNMMDEFARYARLERKINKMTDKLKTHVKARTAQL) is interaction with GET3/TRC40. Residues 100-120 (IKWFISVAFYVLQAALMISLI) traverse the membrane as a helical segment. The Lumenal portion of the chain corresponds to 121 to 148 (WKYYSVPVAVVPSKWITPLDRLVAFPTR). A helical transmembrane segment spans residues 149–169 (VAGGIGVTCWILVCNKVVAII). Residues 170–174 (LHPFS) are Cytoplasmic-facing.

The protein belongs to the WRB/GET1 family. Component of the Golgi to ER traffic (GET) complex, which is composed of GET1, CAMLG/GET2 and GET3. Within the complex, GET1 and CAMLG form a heterotetramer which is stabilized by phosphatidylinositol binding and which binds to the GET3 homodimer. Interacts with CAMLG/GET2 (via C-terminus). GET3 shows a higher affinity for CAMLG than for GET1.

The protein localises to the endoplasmic reticulum membrane. Its function is as follows. Required for the post-translational delivery of tail-anchored (TA) proteins to the endoplasmic reticulum. Together with CAMLG/GET2, acts as a membrane receptor for soluble GET3/TRC40, which recognizes and selectively binds the transmembrane domain of TA proteins in the cytosol. Required to ensure correct topology and ER insertion of CAMLG. In Rattus norvegicus (Rat), this protein is Guided entry of tail-anchored proteins factor 1.